Here is a 789-residue protein sequence, read N- to C-terminus: E3 UFM1-protein ligase 1 (789 aa).

The tract at residues 2–212 is required for E3 UFM1-protein ligase activity; it reads AADWEEIRRL…VSNLITRYGF (211 aa). Disordered regions lie at residues 407–470 and 743–763; these read LENS…TGRN and SKKAEQEDDNKTEEEEGADTI. The segment covering 444 to 453 has biased composition (basic residues); that stretch reads KIKKTKKKGR. The segment covering 748-760 has biased composition (acidic residues); sequence QEDDNKTEEEEGA.

Belongs to the UFL1 family. As to quaternary structure, catalytic component of the UFM1 ribosome E3 ligase (UREL) complex. Interacts with E2-like enzyme UFC1.

The protein localises to the endoplasmic reticulum membrane. It localises to the cytoplasm. It is found in the cytosol. Its subcellular location is the nucleus. The protein resides in the chromosome. E3 protein ligase that mediates ufmylation, the covalent attachment of the ubiquitin-like modifier UFM1 to lysine residues on target proteins, and which plays a key role in various processes, such as ribosome recycling, response to DNA damage, interferon response or reticulophagy (also called ER-phagy). As part of the UREL complex, plays a key role in ribosome recycling by catalyzing mono-ufmylation of RPL26/uL24 subunit of the 60S ribosome. Ufmylation of RPL26/uL24 occurs on free 60S ribosomes following ribosome dissociation: it weakens the junction between post-termination 60S subunits and SEC61 translocons, promoting release and recycling of the large ribosomal subunit from the endoplasmic reticulum membrane. Ufmylation of RPL26/uL24 and subsequent 60S ribosome recycling either take place after normal termination of translation or after ribosome stalling during cotranslational translocation at the endoplasmic reticulum. Involved in reticulophagy in response to endoplasmic reticulum stress by mediating ufmylation of proteins such as CYB5R3 and RPN1, thereby promoting lysosomal degradation of ufmylated proteins. Ufmylation in response to endoplasmic reticulum stress is essential for processes such as hematopoiesis, blood vessel morphogenesis or inflammatory response. In Gallus gallus (Chicken), this protein is E3 UFM1-protein ligase 1.